The following is a 388-amino-acid chain: Putative nickel insertion protein (388 aa).

It belongs to the LarC family.

The chain is Putative nickel insertion protein from Geobacter sulfurreducens (strain ATCC 51573 / DSM 12127 / PCA).